The sequence spans 156 residues: Cyanate hydratase (156 aa).

Catalysis depends on residues Arg96, Glu99, and Ser122.

The protein belongs to the cyanase family.

It carries out the reaction cyanate + hydrogencarbonate + 3 H(+) = NH4(+) + 2 CO2. In terms of biological role, catalyzes the reaction of cyanate with bicarbonate to produce ammonia and carbon dioxide. The sequence is that of Cyanate hydratase from Burkholderia orbicola (strain MC0-3).